The chain runs to 153 residues: NADH dehydrogenase [ubiquinone] 1 beta subcomplex subunit 11, mitochondrial (153 aa).

Residues 1-29 (MAAGLFGLSARRLLAAAATRGLPAARVRW) constitute a mitochondrion transit peptide. Residues 40–76 (PSAVAGKRPPEPTTPWQEDPEPEDENLYEKNPDSHGY) are disordered. The segment covering 66 to 76 (LYEKNPDSHGY) has biased composition (basic and acidic residues). A helical transmembrane segment spans residues 89-109 (LVFFFGVSIILVLGSTFVAYL).

Belongs to the complex I NDUFB11 subunit family. As to quaternary structure, complex I is composed of 45 different subunits. Interacts with BCAP31. In terms of tissue distribution, ubiquitous.

The protein resides in the mitochondrion inner membrane. Accessory subunit of the mitochondrial membrane respiratory chain NADH dehydrogenase (Complex I), that is believed not to be involved in catalysis. Complex I functions in the transfer of electrons from NADH to the respiratory chain. The immediate electron acceptor for the enzyme is believed to be ubiquinone. The protein is NADH dehydrogenase [ubiquinone] 1 beta subcomplex subunit 11, mitochondrial (NDUFB11) of Homo sapiens (Human).